Here is a 78-residue protein sequence, read N- to C-terminus: Putative antitoxin PF1222 (78 aa).

This sequence belongs to the UPF0330 family.

Its function is as follows. Possibly the antitoxin component of a type II toxin-antitoxin (TA) system. This chain is Putative antitoxin PF1222, found in Pyrococcus furiosus (strain ATCC 43587 / DSM 3638 / JCM 8422 / Vc1).